Consider the following 331-residue polypeptide: Protein-methionine-sulfoxide reductase catalytic subunit MsrP (331 aa).

The tat-type signal signal peptide spans 1–54 (MLIKTDRWLRGDDIPASEITPQHLFDQRRRLLAAAALGAAGAALSPWAARRAFA). Mo-molybdopterin-binding positions include Asn86, 89-90 (YE), Cys144, Ser179, Asn227, Arg232, and 243-245 (SAK).

Belongs to the MsrP family. Heterodimer of a catalytic subunit (MsrP) and a heme-binding subunit (MsrQ). It depends on Mo-molybdopterin as a cofactor. Predicted to be exported by the Tat system. The position of the signal peptide cleavage has not been experimentally proven.

It localises to the periplasm. It carries out the reaction L-methionyl-[protein] + a quinone + H2O = L-methionyl-(S)-S-oxide-[protein] + a quinol. The enzyme catalyses L-methionyl-[protein] + a quinone + H2O = L-methionyl-(R)-S-oxide-[protein] + a quinol. Part of the MsrPQ system that repairs oxidized periplasmic proteins containing methionine sulfoxide residues (Met-O), using respiratory chain electrons. Thus protects these proteins from oxidative-stress damage caused by reactive species of oxygen and chlorine generated by the host defense mechanisms. MsrPQ is essential for the maintenance of envelope integrity under bleach stress, rescuing a wide series of structurally unrelated periplasmic proteins from methionine oxidation. The catalytic subunit MsrP is non-stereospecific, being able to reduce both (R-) and (S-) diastereoisomers of methionine sulfoxide. This Ralstonia nicotianae (strain ATCC BAA-1114 / GMI1000) (Ralstonia solanacearum) protein is Protein-methionine-sulfoxide reductase catalytic subunit MsrP.